Here is a 97-residue protein sequence, read N- to C-terminus: Nuclear protein 2 (97 aa).

The disordered stretch occupies residues 76 to 97 (LLNGQRKRRQRQLHPKMRTRLT). Basic residues predominate over residues 80–97 (QRKRRQRQLHPKMRTRLT).

This sequence belongs to the NUPR family.

It is found in the nucleus. Acts as a transcriptional repressor by inhibiting gene expression at the NUPR1 promoter in a p53/TP53-dependent manner in cancer cells. Involved in the G1 cell cycle arrest, and in a decrease in cell viability and cell proliferation. Plays a role as a negative regulator of the protumoral factor NUPR1. This Homo sapiens (Human) protein is Nuclear protein 2.